Reading from the N-terminus, the 964-residue chain is Integrator complex subunit 7 (964 aa).

Residues 937–958 show a composition bias toward low complexity; sequence QQLRHQLQQQQQNVPQPAAQRN. A disordered region spans residues 937-964; the sequence is QQLRHQLQQQQQNVPQPAAQRNISTRFQ.

It belongs to the Integrator subunit 7 family. Component of the Integrator complex, composed of core subunits INTS1, INTS2, INTS3, INTS4, INTS5, INTS6, INTS7, INTS8, INTS9/RC74, INTS10, INTS11/CPSF3L, INTS12, INTS13, INTS14 and INTS15. The core complex associates with protein phosphatase 2A subunits PPP2CA and PPP2R1A, to form the Integrator-PP2A (INTAC) complex.

Its subcellular location is the nucleus. It localises to the chromosome. The protein localises to the cytoplasm. Functionally, component of the integrator complex, a multiprotein complex that terminates RNA polymerase II (Pol II) transcription in the promoter-proximal region of genes. The integrator complex provides a quality checkpoint during transcription elongation by driving premature transcription termination of transcripts that are unfavorably configured for transcriptional elongation: the complex terminates transcription by (1) catalyzing dephosphorylation of the C-terminal domain (CTD) of Pol II subunit POLR2A/RPB1 and SUPT5H/SPT5, (2) degrading the exiting nascent RNA transcript via endonuclease activity and (3) promoting the release of Pol II from bound DNA. The integrator complex is also involved in terminating the synthesis of non-coding Pol II transcripts, such as enhancer RNAs (eRNAs), small nuclear RNAs (snRNAs), telomerase RNAs and long non-coding RNAs (lncRNAs). Essential during embryogenesis for eye development. This is Integrator complex subunit 7 (ints7) from Danio rerio (Zebrafish).